A 640-amino-acid chain; its full sequence is Zinc finger and BTB domain-containing protein 22 (640 aa).

The BTB domain maps to 57–121 (CDVSIRVQGR…AYTGRLSMAA (65 aa)). 3 disordered regions span residues 191-244 (RSHA…PVFP), 308-327 (PAPAPLVPQDPDLEEDEEED), and 332-482 (CEDD…GGTG). The span at 192–210 (SHASSRASENQSPSSSNYF) shows a compositional bias: polar residues. Ser-203 carries the post-translational modification Phosphoserine. Over residues 318–327 (PDLEEDEEED) the composition is skewed to acidic residues. The span at 431–442 (SSSSSSSSSSSS) shows a compositional bias: low complexity. Residues 469 to 482 (GMPGGPGGTPGGTG) show a composition bias toward gly residues. The C2H2-type 1; atypical zinc finger occupies 490–511 (FLCHCGKAFSHKSMRDRHVNMH). C2H2-type zinc fingers lie at residues 517 to 539 (FDCPVCNKKFKMKHHLTEHMKTH) and 545 to 571 (YECGVCAKKFMWRDSFMRHRGHCERRH). Residues 571–640 (HRLVGGGGGG…MGFGGGGGTN (70 aa)) form a disordered region. Gly residues predominate over residues 574–588 (VGGGGGGGPGPGGPT).

This sequence belongs to the krueppel C2H2-type zinc-finger protein family.

The protein localises to the nucleus. Its function is as follows. May be involved in transcriptional regulation. The chain is Zinc finger and BTB domain-containing protein 22 (ZBTB22) from Canis lupus familiaris (Dog).